Reading from the N-terminus, the 169-residue chain is Lipoprotein signal peptidase (169 aa).

4 helical membrane-spanning segments follow: residues 4–24, 42–62, 70–90, and 102–122; these read PICS…IVDL, LIPF…SFLA, WFFA…MYRS, and ALII…GAVI. Catalysis depends on residues D123 and D141. The helical transmembrane segment at 137 to 157 threads the bilayer; sequence FNIADTAICIGAALVIFEGFI.

Belongs to the peptidase A8 family.

It localises to the cell inner membrane. The catalysed reaction is Release of signal peptides from bacterial membrane prolipoproteins. Hydrolyzes -Xaa-Yaa-Zaa-|-(S,diacylglyceryl)Cys-, in which Xaa is hydrophobic (preferably Leu), and Yaa (Ala or Ser) and Zaa (Gly or Ala) have small, neutral side chains.. Its pathway is protein modification; lipoprotein biosynthesis (signal peptide cleavage). This protein specifically catalyzes the removal of signal peptides from prolipoproteins. The sequence is that of Lipoprotein signal peptidase from Yersinia enterocolitica serotype O:8 / biotype 1B (strain NCTC 13174 / 8081).